The sequence spans 482 residues: Guanine nucleotide exchange factor SRM1 (482 aa).

Positions 1 to 11 are enriched in polar residues; the sequence is MVKRTVATNGD. The interval 1–22 is disordered; it reads MVKRTVATNGDASGAHRAKKMS. Residues 15 to 26 carry the Nuclear localization signal motif; it reads AHRAKKMSKTHA. RCC1 repeat units lie at residues 45–101, 103–152, 183–238, 239–291, 292–347, 349–411, and 412–466; these read PLDI…ALDE, SNVW…TPAK, NGEV…FLDE, EGMV…ALTK, DNKL…ILSQ, GDLY…AVAQ, and NGIA…SGGV. Residues 128–158 form a disordered region; it reads KDMDADDSSDDEDGDLNELESTPAKIPRESF. Over residues 131-145 the composition is skewed to acidic residues; the sequence is DADDSSDDEDGDLNE. 2 positions are modified to phosphoserine: S135 and S136.

As to quaternary structure, component of a multicomponent complex composed of six to seven proteins, which has a collective molecular mass greater than 150 kDa. Interacts with GSP1 and YRB2. Phosphorylated; possibly by KSP1.

It is found in the nucleus. Its function is as follows. Guanine nucleotide exchange factor that promotes the exchange of GSP1/GSP2-bound GDP by GTP and controls RNA metabolism and transport. Involved in yeast pheromone response pathway and in mRNA metabolism. Involved in nuclear pore complex (NPC) assembly and required for mRNA and ribosome nuclear export. Binds chromatin and is involved NPC-mediated transcriptional control. The protein is Guanine nucleotide exchange factor SRM1 (SRM1) of Saccharomyces cerevisiae (strain ATCC 204508 / S288c) (Baker's yeast).